The chain runs to 526 residues: Glutamyl-tRNA(Gln) amidotransferase subunit A, mitochondrial (526 aa).

Residues Lys-76 and Ser-171 each act as charge relay system in the active site. Ser-195 functions as the Acyl-ester intermediate in the catalytic mechanism.

This sequence belongs to the amidase family. GatA subfamily. In terms of assembly, subunit of the heterotrimeric GatCAB amidotransferase (AdT) complex, composed of A (QRSL1), B (GATB) and C (GATC) subunits.

It is found in the mitochondrion. The catalysed reaction is L-glutamyl-tRNA(Gln) + L-glutamine + ATP + H2O = L-glutaminyl-tRNA(Gln) + L-glutamate + ADP + phosphate + H(+). Functionally, allows the formation of correctly charged Gln-tRNA(Gln) through the transamidation of misacylated Glu-tRNA(Gln) in the mitochondria. The reaction takes place in the presence of glutamine and ATP through an activated gamma-phospho-Glu-tRNA(Gln). This chain is Glutamyl-tRNA(Gln) amidotransferase subunit A, mitochondrial, found in Canis lupus familiaris (Dog).